The following is a 1181-amino-acid chain: Katanin p80 WD40 repeat-containing subunit B1 homolog KTN80.2 (1181 aa).

WD repeat units follow at residues 13-53, 56-95, 98-137, 140-181, 183-221, 224-264, and 266-303; these read AHSA…SLMS, GHTSAVDSVAFDSAEVLVLAGASSGVIKLWDVEEAKMVRA, GHRSNCSAVEFHPFGEFLASGSSDANLKIWDIRKKGCIQT, GHSR…HEFK, HEGPIRSLDFHPLEFLLATGSADRTVKFWDLETFELIGS, PEAT…DGVD, and GWSTLGDLCISEGKLLGCSYYQNSVGIWVSDISQIEPY. Residues 114–130 carry the DWD box motif; sequence FLASGSSDANLKIWDIR. Disordered stretches follow at residues 361-383, 503-597, 702-739, 754-869, and 988-1008; these read AHKSGSLSTPATSTGQAGDNKSL, KPPR…ESKS, TSMATDTPPVTSTRPDRTSATNLTSDVSGVTSKRQTRT, KMKS…VIST, and TKTQQSSDILTQKEEPQISGR. Polar residues-rich tracts occupy residues 365-379 and 509-526; these read GSLSTPATSTGQAGD and RSPSTKYNEARWATSTDS. Composition is skewed to basic and acidic residues over residues 530–553 and 569–585; these read DSKKNGLESSRDMDLPTGLRDDRG and RSERVLSPEKAGDELKS. Composition is skewed to polar residues over residues 703 to 739, 754 to 791, 822 to 841, and 850 to 859; these read SMATDTPPVTSTRPDRTSATNLTSDVSGVTSKRQTRT, KMKSDEPSITSTWPDRTSATDLTSDVSGVISSRQTRTS, SATNLTSDESPVTSTRQAKT, and ILNQRQTTNM. Over residues 998–1008 the composition is skewed to basic and acidic residues; that stretch reads TQKEEPQISGR.

Belongs to the WD repeat KATNB1 family. In terms of assembly, component of KTN80-KTN1 complexes composed of a hexamer of KTN1-KTN80 heterodimers that sense microtubule (MT) geometry to confer precise MT severing. Interacts directly with AAA1/KTN1. Interacts with subunits of the CUL4-based E3 ligase complex DDB1A and DDB1B. In terms of tissue distribution, expressed at low levels in siliques, flowers, leaves, stems and roots.

It is found in the cytoplasm. The protein resides in the cytoskeleton. May participate in a complex which severs microtubules in an ATP-dependent manner. Microtubule severing may promote rapid reorganization of cellular microtubule arrays. Confers precision to microtubule (MT) severing by specific targeting of KTN1 to MT cleavage sites such as crossover or branching nucleation sites. Together with other KTN80s, regulates cell elongation by modulating MT organization. Negative regulator of abscisic acid (ABA) responses. May function as a substrate receptor for cullin-RING ubiquitin ligase 4 complexes (CRL4), a family of E3 ligases involved in protein degradation. In Arabidopsis thaliana (Mouse-ear cress), this protein is Katanin p80 WD40 repeat-containing subunit B1 homolog KTN80.2.